Reading from the N-terminus, the 190-residue chain is MRYLTALFVLVASPALAAGDDAPKGLFNPSLGNTDFVVLLGFLLFLAILFYFGVPKMLGGMLDARAEGIRSELDEARALREEAQTLLASYERKAREVEEQSARIVTEARANAETAAEQAKADIERSITRRLAAAEDQIASAEAKASRAVRDTAASVAVAAAAEVIAGGTSATDQNKMIDEAIEEVGRQLH.

Residues 35–55 (DFVVLLGFLLFLAILFYFGVP) form a helical membrane-spanning segment.

It belongs to the ATPase B chain family. In terms of assembly, F-type ATPases have 2 components, F(1) - the catalytic core - and F(0) - the membrane proton channel. F(1) has five subunits: alpha(3), beta(3), gamma(1), delta(1), epsilon(1). F(0) has three main subunits: a(1), b(2) and c(10-14). The alpha and beta chains form an alternating ring which encloses part of the gamma chain. F(1) is attached to F(0) by a central stalk formed by the gamma and epsilon chains, while a peripheral stalk is formed by the delta and b chains.

Its subcellular location is the cell inner membrane. Functionally, f(1)F(0) ATP synthase produces ATP from ADP in the presence of a proton or sodium gradient. F-type ATPases consist of two structural domains, F(1) containing the extramembraneous catalytic core and F(0) containing the membrane proton channel, linked together by a central stalk and a peripheral stalk. During catalysis, ATP synthesis in the catalytic domain of F(1) is coupled via a rotary mechanism of the central stalk subunits to proton translocation. In terms of biological role, component of the F(0) channel, it forms part of the peripheral stalk, linking F(1) to F(0). The sequence is that of ATP synthase subunit b 1 from Jannaschia sp. (strain CCS1).